Reading from the N-terminus, the 856-residue chain is Dynamin-1 (856 aa).

A Dynamin-type G domain is found at 28–294 (DLDLPQIAVV…LTNHIRDTLP (267 aa)). Residues 38-45 (GGQSAGKS) form a G1 motif region. Ser41, Gly43, Lys44, Ser45, Ser46, Arg59, and Gly60 together coordinate GDP. The segment at 64–66 (VTR) is G2 motif. Tyr80 bears the Phosphotyrosine mark. Tyr125 is subject to 3'-nitrotyrosine; alternate. The residue at position 125 (Tyr125) is a Phosphotyrosine; alternate. Residues 136-139 (DLPG) form a G3 motif region. Residues 205-208 (TKLD) are G4 motif. GDP is bound by residues Lys206, Asp208, Asp211, Asn236, Arg237, and Gln239. Positions 235–238 (VNRS) are G5 motif. 2 positions are modified to phosphoserine: Ser306 and Ser347. Tyr354 is subject to Phosphotyrosine. Position 512 is a phosphoserine (Ser512). The PH domain occupies 519–625 (LVIRKGWLTI…WKASFLRAGV (107 aa)). Residues 659–750 (VETIRNLVDS…IIGDINTTTV (92 aa)) enclose the GED domain. The disordered stretch occupies residues 750–856 (VSTPMPPPVD…PIGSGKSIPS (107 aa)). A compositionally biased stretch (polar residues) spans 763–781 (LQVQSVPTGRRSPTSSPTP). Phosphoserine is present on residues Ser774 and Ser778. At Arg796 the chain carries Omega-N-methylarginine. The residue at position 822 (Ser822) is a Phosphoserine. Residues 825–844 (PFGPPPQVPSRPNRAPPGVP) show a composition bias toward pro residues.

This sequence belongs to the TRAFAC class dynamin-like GTPase superfamily. Dynamin/Fzo/YdjA family. As to quaternary structure, homodimer; homodimerization is mediated by the dynamin-type G domain which promotes assembly-stimulated GTPase activity. Homo-tetramer formed from two dimers in the absence of lipid. Oligomerizes into a helical polymer that self-assembles around the vesicle membrane, when associated to the menbrane through lipid binding. Interacts (via C-terminal proline-rich domain (PRD)) with SNX9 (via SH3 domain); this interaction allows regulation of DNM1 self-assembly during late stages of endocytic vesicle formation and supports DNM1's early functions in accelerating clathrin-coated pits (CCPs) maturation in non neuronals cell. Interacts (via C-terminal proline-rich domain (PRD)) with MYO1E (via SH3 domain); this interaction regulates receptor-mediated endocytosis. Interacts with SNX33 (via SH3 domain); this interaction decreases DNM1-dependent endocytosis. Interacts with DIAPH1. Interacts with GRB2 (via SH3 domain); this interaction mediates disassembly of DNM1 polymers, therefore modulates self-assembly. Forms a complex with BIN1 (via SH3 domain) and SH3GL2 (via SH3 domain). Forms a complex with SH3GL2 (via SH3 domain) and AMPH (via SH3 domain). Forms a complex with SH3GL2 (via SH3 domain) and SYNJ1. Interacts with AMPH. Interacts (via C-terminal proline-rich domain (PRD)) with SYT1; this interaction facilitates vesicle fission during clathrin-mediated endocytosis (CME). Interacts (via C-terminal proline-rich domain (PRD)) with PLCG1 (via SH3 domain); this interaction stimulates the release of GDP from DNM1 and enhances DNM1-dependent endocytosis. Interacts with SNPH; this interaction inhibits the binding of DNM1 to AMPH and DNM1-receptor-mediated endocytosis. Interacts with CAV1. Interacts with SH3GLB1 (via SH3 domain). Interacts with PACSIN1 (via SH3 domain), PACSIN2 (via SH3 domain) and PACSIN3 (via SH3 domain). Interacts with UNC119; this interaction decreases DNM1's GTPase activity and affects DNM1's interaction with AMPH. Interacts with AMPH. Interacts (GTP-bound form) with DNAJC6; this interaction allows clathrin-coated vesicle (CCV) formation at the plasma membrane. Phosphorylation at Ser-774 by GSK3B/GSK3-beta leads to inactivation of receptor-mediated endocytosis in non-neuronal cells. Dephosphorylation at Ser-774, through the EGFR downstream signaling, leads to activation and regulates early stages of clathrin-mediated endocytosis (CME).

The protein localises to the cell membrane. It is found in the membrane. Its subcellular location is the clathrin-coated pit. The protein resides in the cytoplasmic vesicle. It localises to the presynapse. The protein localises to the secretory vesicle. It is found in the chromaffin granule. It catalyses the reaction GTP + H2O = GDP + phosphate + H(+). Its function is as follows. Catalyzes the hydrolysis of GTP and utilizes this energy to mediate vesicle scission and participates in many forms of endocytosis, such as clathrin-mediated endocytosis or synaptic vesicle endocytosis as well as rapid endocytosis (RE). Associates to the membrane, through lipid binding, and self-assembles into rings and stacks of interconnected rings through oligomerization to form a helical polymer around the vesicle membrane leading to constriction of invaginated coated pits around their necks. Self-assembly of the helical polymer induces membrane tubules narrowing until the polymer reaches a length sufficient to trigger GTP hydrolysis. Depending on the curvature imposed on the tubules, membrane detachment from the helical polymer upon GTP hydrolysis can cause spontaneous hemifission followed by complete fission. May play a role in regulating early stages of clathrin-mediated endocytosis in non-neuronal cells through its activation by dephosphorylation via the signaling downstream of EGFR. Controls vesicle size at a step before fission, during formation of membrane pits, at hippocampal synapses. Controls plastic adaptation of the synaptic vesicle recycling machinery to high levels of activity. Mediates rapid endocytosis (RE), a Ca(2+)-dependent and clathrin- and K(+)-independent process in chromaffin cells. Microtubule-associated force-producing protein involved in producing microtubule bundles and able to bind and hydrolyze GTP. Through its interaction with DNAJC6, acts during the early steps of clathrin-coated vesicle (CCV) formation. The chain is Dynamin-1 from Bos taurus (Bovine).